The sequence spans 322 residues: Malate dehydrogenase (322 aa).

Residues 10 to 15 (GSGQIG) and Asp-34 contribute to the NAD(+) site. The substrate site is built by Arg-83 and Arg-89. NAD(+) contacts are provided by residues Asn-96 and 119-121 (ITN). Substrate-binding residues include Asn-121 and Arg-152. His-176 (proton acceptor) is an active-site residue.

The protein belongs to the LDH/MDH superfamily. MDH type 3 family.

The enzyme catalyses (S)-malate + NAD(+) = oxaloacetate + NADH + H(+). Functionally, catalyzes the reversible oxidation of malate to oxaloacetate. In Bradyrhizobium diazoefficiens (strain JCM 10833 / BCRC 13528 / IAM 13628 / NBRC 14792 / USDA 110), this protein is Malate dehydrogenase.